We begin with the raw amino-acid sequence, 180 residues long: MYHVIAATTNPAKINAITLAFDDVYGPGQYRIEGVNVDSGVPLQPIGSTETRIGARQRVKNARQVRPEADFWVGIEAGIEDNMTFAWMVVEHLQARGESRSASLMLPDIILQGIRQGRELGDEMAVLSGISNVKQQGGAIGIFTQGKLTRTSVYHQALLLALVPFHNEIYQRPSPSKPAI.

Residue 8–13 (TTNPAK) coordinates substrate. The Mg(2+) site is built by D38 and E68. 68–69 (EA) provides a ligand contact to substrate.

This sequence belongs to the YjjX NTPase family. Homodimer. The cofactor is Mg(2+). Mn(2+) is required as a cofactor.

The enzyme catalyses XTP + H2O = XDP + phosphate + H(+). The catalysed reaction is ITP + H2O = IDP + phosphate + H(+). Its function is as follows. Phosphatase that hydrolyzes non-canonical purine nucleotides such as XTP and ITP to their respective diphosphate derivatives. Probably excludes non-canonical purines from DNA/RNA precursor pool, thus preventing their incorporation into DNA/RNA and avoiding chromosomal lesions. In Yersinia pestis bv. Antiqua (strain Antiqua), this protein is Inosine/xanthosine triphosphatase.